Consider the following 487-residue polypeptide: 3-octaprenyl-4-hydroxybenzoate carboxy-lyase (487 aa).

Position 172 (Asn-172) interacts with Mn(2+). Residues 175-177 (IYR), 189-191 (RWL), and 194-195 (RG) each bind prenylated FMN. Glu-238 is a Mn(2+) binding site. Residue Asp-287 is the Proton donor of the active site.

The protein belongs to the UbiD family. As to quaternary structure, homohexamer. Prenylated FMN is required as a cofactor. Mn(2+) serves as cofactor.

Its subcellular location is the cell membrane. It catalyses the reaction a 4-hydroxy-3-(all-trans-polyprenyl)benzoate + H(+) = a 2-(all-trans-polyprenyl)phenol + CO2. Its pathway is cofactor biosynthesis; ubiquinone biosynthesis. Its function is as follows. Catalyzes the decarboxylation of 3-octaprenyl-4-hydroxy benzoate to 2-octaprenylphenol, an intermediate step in ubiquinone biosynthesis. This chain is 3-octaprenyl-4-hydroxybenzoate carboxy-lyase, found in Actinobacillus pleuropneumoniae serotype 5b (strain L20).